The following is a 325-amino-acid chain: uncharacterized protein (325 aa).

Residues 1–26 (MQGRVAGSCAPLGLLLVCLHLPGLFA) form the signal peptide. The span at 41 to 60 (GTNLPQLGQPSSTGPSNSEH) shows a compositional bias: polar residues. Disordered regions lie at residues 41-110 (GTNL…MDSW) and 147-189 (GSGP…AGGK). Positions 147–157 (GSGPLPGESSP) are enriched in low complexity.

As to quaternary structure, binds to numerous extracellular matrix proteins. In terms of tissue distribution, expressed in skin and tonsils.

It localises to the secreted. The protein resides in the extracellular space. The protein localises to the extracellular matrix. This is an uncharacterized protein from Homo sapiens (Human).